Here is a 566-residue protein sequence, read N- to C-terminus: F-box/WD repeat-containing protein 5 (566 aa).

An F-box domain is found at 3-49 (EGGTPLLPDSLVYQIFLSLGPADVLAAGLVCRQWQAVSRDEFLWREQ). WD repeat units follow at residues 83 to 125 (VEVQ…DLTI), 126 to 178 (SLLH…LDSF), 179 to 238 (ALLS…VKRL), and 239 to 281 (FKIQ…RIFD). The residue at position 151 (Ser151) is a Phosphoserine; by PLK4. At Ser284 the chain carries Phosphoserine. The short motif at 303–311 (RHFLDRVLE) is the D-box element. WD repeat units follow at residues 394-447 (ALDH…DLLV), 458-501 (RALR…RHYN), and 502-539 (ICLA…KAWR).

Belongs to the FBXW5 family. Part of the SCF (SKP1-CUL1-F-box) E3 ubiquitin-protein ligase complex SCF(FBXW5) composed of CUL1, SKP1, RBX1 and FBXW5. Component of the DCX(FBXW5) E3 ubiquitin ligase complex, at least composed of (CUL4A or CUL4B), DDB1, FBXW5 and RBX1. Interacts with CDC20, EPS8, TSC1, TSC2 and SASS6. Interacts with TNFAIP8L1; TNFAIP8L1 competes with TSC2 to bind FBXW5 increasing TSC2 stability by preventing its ubiquitination. Post-translationally, phosphorylated at Ser-151 by PLK4 during the G1/S transition, leading to inhibit its ability to ubiquitinate SASS6. Ubiquitinated and degraded by the APC/C complex during mitosis and G1 phase.

It localises to the cytoplasm. It participates in protein modification; protein ubiquitination. In terms of biological role, substrate recognition component of both SCF (SKP1-CUL1-F-box protein) and DCX (DDB1-CUL4-X-box) E3 ubiquitin-protein ligase complexes. Substrate recognition component of the SCF(FBXW5) E3 ubiquitin-protein ligase complex which mediates the ubiquitination and subsequent proteasomal degradation of SASS6 during S phase, leading to prevent centriole reduplication. The SCF(FBXW5) complex also mediates ubiquitination and degradation of actin-regulator EPS8 during G2 phase, leading to the transient degradation of EPS8 and subsequent cell shape changes required to allow mitotic progression. Substrate-specific adapter of the DCX(FBXW5) E3 ubiquitin-protein ligase complex which mediates the polyubiquitination and subsequent degradation of TSC2. May also act as a negative regulator of MAP3K7/TAK1 signaling in the interleukin-1B (IL1B) signaling pathway. The sequence is that of F-box/WD repeat-containing protein 5 (FBXW5) from Homo sapiens (Human).